A 97-amino-acid chain; its full sequence is Early nodulin-75 (97 aa).

Residues 1-97 (RPHVHPPPEH…PEYQPPHEKP (97 aa)) form a disordered region. 2 stretches are compositionally biased toward pro residues: residues 9–22 (EHQP…PEYQ) and 31–43 (VHPP…PYQK). Positions 76-97 (PPHEKPPHEHPPPEYQPPHEKP) are enriched in basic and acidic residues.

The protein belongs to the nodulin 75 family.

In terms of biological role, involved in early stages of root nodule development. This chain is Early nodulin-75 (ENOD2), found in Medicago sativa (Alfalfa).